We begin with the raw amino-acid sequence, 209 residues long: N-(5'-phosphoribosyl)anthranilate isomerase (209 aa).

The protein belongs to the TrpF family.

It carries out the reaction N-(5-phospho-beta-D-ribosyl)anthranilate = 1-(2-carboxyphenylamino)-1-deoxy-D-ribulose 5-phosphate. The protein operates within amino-acid biosynthesis; L-tryptophan biosynthesis; L-tryptophan from chorismate: step 3/5. The polypeptide is N-(5'-phosphoribosyl)anthranilate isomerase (Staphylococcus carnosus (strain TM300)).